Here is a 397-residue protein sequence, read N- to C-terminus: Decapping and exoribonuclease protein (397 aa).

Positions methionine 1–alanine 10 are enriched in basic residues. Positions methionine 1–arginine 30 are disordered. Residues arginine 58, glutamate 101, and tryptophan 131–glycine 133 each bind substrate. Methionine 185 contacts adenosine 3',5'-bisphosphate. Position 192 (glutamate 192) interacts with Mg(2+). Residues cysteine 217 and glutamate 234 each contribute to the substrate site. Positions 234, 236, 253, and 254 each coordinate Mg(2+). Aspartate 236 is a binding site for adenosine 3',5'-bisphosphate. Residues glutamate 253 to threonine 256 form an adenosine 3',5'-bisphosphate; inhibitor region. Substrate contacts are provided by lysine 255 and glutamine 280. An adenosine 3',5'-bisphosphate-binding site is contributed by glutamine 280. Threonine 392 carries the phosphothreonine modification. Serine 394 carries the post-translational modification Phosphoserine.

The protein belongs to the DXO/Dom3Z family. Requires Mg(2+) as cofactor.

Its subcellular location is the nucleus. It carries out the reaction a 5'-end triphospho-ribonucleoside in mRNA + H2O = a 5'-end phospho-ribonucleoside in mRNA + diphosphate + H(+). The catalysed reaction is a 5'-end NAD(+)-phospho-ribonucleoside in mRNA + H2O = a 5'-end phospho-ribonucleoside in mRNA + NAD(+) + H(+). The enzyme catalyses a 5'-end NAD(+)-phospho-ribonucleoside in snoRNA + H2O = a 5'-end phospho-ribonucleoside in snoRNA + NAD(+) + H(+). It catalyses the reaction a 5'-end (N(7)-methyl 5'-triphosphoguanosine)-ribonucleoside-ribonucleotide in mRNA + H2O = a (N(7)-methyl 5'-triphosphoguanosine)-nucleoside + a 5'-end phospho-ribonucleoside in mRNA + H(+). It carries out the reaction a 5'-end FAD-phospho-ribonucleoside in mRNA + H2O = a 5'-end phospho-ribonucleoside in mRNA + FAD + H(+). The catalysed reaction is a 5'-end CoA-ribonucleoside in mRNA + H2O = 3'-dephospho-CoA + a 5'-end phospho-ribonucleoside in mRNA + H(+). Its activity is regulated as follows. The 5'-3' exoribonuclease activity is inhibited by adenosine 3',5'-bisphosphate. Decapping enzyme for NAD-capped RNAs: specifically hydrolyzes the nicotinamide adenine dinucleotide (NAD) cap from a subset of RNAs by removing the entire NAD moiety from the 5'-end of an NAD-capped RNA. The NAD-cap is present at the 5'-end of some RNAs and snoRNAs. In contrast to the canonical 5'-end N7 methylguanosine (m7G) cap, the NAD cap promotes mRNA decay. Preferentially acts on NAD-capped transcripts in response to environmental stress. Also acts as a non-canonical decapping enzyme that removes the entire cap structure of m7G capped or incompletely capped RNAs and mediates their subsequent degradation. Specifically degrades pre-mRNAs with a defective 5'-end m7G cap and is part of a pre-mRNA capping quality control. Has decapping activity toward incomplete 5'-end m7G cap mRNAs such as unmethylated 5'-end-capped RNA (cap0), while it has no activity toward 2'-O-ribose methylated m7G cap (cap1). In contrast to canonical decapping enzymes DCP2 and NUDT16, which cleave the cap within the triphosphate linkage, the decapping activity releases the entire cap structure GpppN and a 5'-end monophosphate RNA. Also has 5'-3' exoribonuclease activities: The 5'-end monophosphate RNA is then degraded by the 5'-3' exoribonuclease activity, enabling this enzyme to decap and degrade incompletely capped mRNAs. Also possesses RNA 5'-pyrophosphohydrolase activity by hydrolyzing the 5'-end triphosphate to release pyrophosphates. Exhibits decapping activity towards FAD-capped RNAs. Exhibits decapping activity towards dpCoA-capped RNAs in vitro. The protein is Decapping and exoribonuclease protein of Mus musculus (Mouse).